Here is a 369-residue protein sequence, read N- to C-terminus: UDP-N-acetylglucosamine--N-acetylmuramyl-(pentapeptide) pyrophosphoryl-undecaprenol N-acetylglucosamine transferase (369 aa).

UDP-N-acetyl-alpha-D-glucosamine-binding positions include 10–12, N124, R166, S196, I251, and Q296; that span reads TAG.

The protein belongs to the glycosyltransferase 28 family. MurG subfamily.

The protein localises to the cell membrane. The catalysed reaction is di-trans,octa-cis-undecaprenyl diphospho-N-acetyl-alpha-D-muramoyl-L-alanyl-D-glutamyl-meso-2,6-diaminopimeloyl-D-alanyl-D-alanine + UDP-N-acetyl-alpha-D-glucosamine = di-trans,octa-cis-undecaprenyl diphospho-[N-acetyl-alpha-D-glucosaminyl-(1-&gt;4)]-N-acetyl-alpha-D-muramoyl-L-alanyl-D-glutamyl-meso-2,6-diaminopimeloyl-D-alanyl-D-alanine + UDP + H(+). The protein operates within cell wall biogenesis; peptidoglycan biosynthesis. Functionally, cell wall formation. Catalyzes the transfer of a GlcNAc subunit on undecaprenyl-pyrophosphoryl-MurNAc-pentapeptide (lipid intermediate I) to form undecaprenyl-pyrophosphoryl-MurNAc-(pentapeptide)GlcNAc (lipid intermediate II). This Acetivibrio thermocellus (strain ATCC 27405 / DSM 1237 / JCM 9322 / NBRC 103400 / NCIMB 10682 / NRRL B-4536 / VPI 7372) (Clostridium thermocellum) protein is UDP-N-acetylglucosamine--N-acetylmuramyl-(pentapeptide) pyrophosphoryl-undecaprenol N-acetylglucosamine transferase.